The primary structure comprises 350 residues: Biotin synthase (350 aa).

In terms of domain architecture, Radical SAM core spans 42–269 (NEVQVSTLCS…QSHVRLSAGR (228 aa)). The [4Fe-4S] cluster site is built by cysteine 57, cysteine 61, and cysteine 64. The [2Fe-2S] cluster site is built by cysteine 101, cysteine 132, cysteine 192, and arginine 264.

This sequence belongs to the radical SAM superfamily. Biotin synthase family. As to quaternary structure, homodimer. Requires [4Fe-4S] cluster as cofactor. [2Fe-2S] cluster serves as cofactor.

The catalysed reaction is (4R,5S)-dethiobiotin + (sulfur carrier)-SH + 2 reduced [2Fe-2S]-[ferredoxin] + 2 S-adenosyl-L-methionine = (sulfur carrier)-H + biotin + 2 5'-deoxyadenosine + 2 L-methionine + 2 oxidized [2Fe-2S]-[ferredoxin]. The protein operates within cofactor biosynthesis; biotin biosynthesis; biotin from 7,8-diaminononanoate: step 2/2. Functionally, catalyzes the conversion of dethiobiotin (DTB) to biotin by the insertion of a sulfur atom into dethiobiotin via a radical-based mechanism. The protein is Biotin synthase of Saccharophagus degradans (strain 2-40 / ATCC 43961 / DSM 17024).